Here is a 234-residue protein sequence, read N- to C-terminus: Thrombin-like enzyme ancrod (234 aa).

Residues V1–A227 form the Peptidase S1 domain. Cystine bridges form between C7–C141, C28–C44, C78–C232, C120–C188, C152–C167, and C178–C203. N-linked (GlcNAc...) asparagine glycosylation occurs at N23. Catalysis depends on H43, which acts as the Charge relay system. N79 carries an N-linked (GlcNAc...) asparagine glycan. The active-site Charge relay system is the D88. 2 N-linked (GlcNAc...) asparagine glycosylation sites follow: N99 and N148. The Charge relay system role is filled by S182. N229 is a glycosylation site (N-linked (GlcNAc...) asparagine).

This sequence belongs to the peptidase S1 family. Snake venom subfamily. In terms of assembly, monomer. Expressed by the venom gland.

Its subcellular location is the secreted. It carries out the reaction Selective cleavage of Arg-|-Xaa bond in fibrinogen, to form fibrin, and release fibrinopeptide A. The specificity of further degradation of fibrinogen varies with species origin of the enzyme.. Its function is as follows. Thrombin-like snake venom serine protease that acts as an anticoagulant. It cleaves fibrinogen (FGA) to split off the A-fibrinopeptides (A, AY and AP), but not the B-fibrinopeptide. The resulting fibrin polymers are imperfectly formed and much smaller in size (1 to 2 um long) than the fibrin polymers produced by the action of thrombin. These ancrod-induced microthrombi are friable, unstable, urea-soluble and have significantly degraded alpha chains. They do not cross-link to form thrombi. They are markedly susceptible to digestion by plasmin and are rapidly removed from circulation by either reticuloendothelial phagocytosis or normal fibrinolysis, or both. Anticoagulation through the removal of fibrinogen from the blood is rapid, occurring within hours following its administration. It does not activate plasminogen and does not degrade preformed, fully cross-linked thrombin fibrin. It also reduces the level of plasminogen activator inhibitor (PAI) and may stimulate the release of tissue plasminogen activator (PLAT) from the endothelium. The profibrinolytic effect of these 2 actions appears to be limited to local microthrombus degradation. The polypeptide is Thrombin-like enzyme ancrod (Calloselasma rhodostoma (Malayan pit viper)).